A 921-amino-acid polypeptide reads, in one-letter code: Isoleucine--tRNA ligase (921 aa).

Residues 59-69 (PYANGHLHIGH) carry the 'HIGH' region motif. L-isoleucyl-5'-AMP is bound at residue glutamate 569. Residues 610–614 (KMSKS) carry the 'KMSKS' region motif. Lysine 613 serves as a coordination point for ATP. The Zn(2+) site is built by cysteine 894, cysteine 897, cysteine 909, and cysteine 912.

This sequence belongs to the class-I aminoacyl-tRNA synthetase family. IleS type 1 subfamily. As to quaternary structure, monomer. The cofactor is Zn(2+).

The protein resides in the cytoplasm. It catalyses the reaction tRNA(Ile) + L-isoleucine + ATP = L-isoleucyl-tRNA(Ile) + AMP + diphosphate. Its function is as follows. Catalyzes the attachment of isoleucine to tRNA(Ile). As IleRS can inadvertently accommodate and process structurally similar amino acids such as valine, to avoid such errors it has two additional distinct tRNA(Ile)-dependent editing activities. One activity is designated as 'pretransfer' editing and involves the hydrolysis of activated Val-AMP. The other activity is designated 'posttransfer' editing and involves deacylation of mischarged Val-tRNA(Ile). The chain is Isoleucine--tRNA ligase from Campylobacter lari (strain RM2100 / D67 / ATCC BAA-1060).